Consider the following 205-residue polypeptide: MSRSRSAAASSSQKPDDMDLMSPDGSASSPSAPNTPATNSGGFSSDRKKATHLRCERQRREAINSGYSDLKDLIPQTTTSLGCKTTNAAILFRACDFMSQLKTDISDADKQLAQLNAQAAALEMIASEYEQMASSVPDAGQSTIQVKMLQLLLDDCFTSFSSQVDFTTYATITRTLLSWVESLAPNAEPFKSTAGKMVTMPFTSP.

Low complexity-rich tracts occupy residues 1–12 (MSRSRSAAASSS) and 26–40 (SASS…ATNS). The interval 1 to 58 (MSRSRSAAASSSQKPDDMDLMSPDGSASSPSAPNTPATNSGGFSSDRKKATHLRCERQ) is disordered. The span at 45-58 (SDRKKATHLRCERQ) shows a compositional bias: basic and acidic residues. The interval 47-60 (RKKATHLRCERQRR) is basic motif. The bHLH domain occupies 47 to 101 (RKKATHLRCERQRREAINSGYSDLKDLIPQTTTSLGCKTTNAAILFRACDFMSQL). The interval 61–101 (EAINSGYSDLKDLIPQTTTSLGCKTTNAAILFRACDFMSQL) is helix-loop-helix motif. The stretch at 98–132 (MSQLKTDISDADKQLAQLNAQAAALEMIASEYEQM) forms a coiled coil.

As to expression, widely expressed.

It is found in the nucleus. Its subcellular location is the cytoplasm. It localises to the mitochondrion. Its function is as follows. Transcription factor. Binds to the E box motif 5'-CACGTG-3', probably in a heterodimeric complex with mml-1. Involved in modulating longevity in response to TOR signaling, dietary restriction, the decline in protein homeostasis associated with normal aging, germline signaling and the insulin-like signaling pathway. Plays a role in autophagy. Involved in regulating migration of the ray 1 precursor cells in the male tail, acting in concert with Wnt and semaphorin signaling pathways. Regulates transcription of genes encoding extracellular matrix (ECM) components which may contribute to the substratum required for migration of the neighboring ray 1 precursor cells. Required for resistance to oxidative stress. Involved in promoting infection by the microsporidian pathogen N.parisii, probably acting independently of its canonical partner, mml-1. This chain is Max-like protein homolog 2, found in Caenorhabditis elegans.